The chain runs to 198 residues: Peptidyl-tRNA hydrolase (198 aa).

Y15 contacts tRNA. H20 serves as the catalytic Proton acceptor. TRNA contacts are provided by F65, N67, and N113.

Belongs to the PTH family. Monomer.

The protein localises to the cytoplasm. The catalysed reaction is an N-acyl-L-alpha-aminoacyl-tRNA + H2O = an N-acyl-L-amino acid + a tRNA + H(+). Functionally, hydrolyzes ribosome-free peptidyl-tRNAs (with 1 or more amino acids incorporated), which drop off the ribosome during protein synthesis, or as a result of ribosome stalling. Its function is as follows. Catalyzes the release of premature peptidyl moieties from peptidyl-tRNA molecules trapped in stalled 50S ribosomal subunits, and thus maintains levels of free tRNAs and 50S ribosomes. This is Peptidyl-tRNA hydrolase from Ehrlichia chaffeensis (strain ATCC CRL-10679 / Arkansas).